The chain runs to 139 residues: Large ribosomal subunit protein uL14 (139 aa).

The protein belongs to the universal ribosomal protein uL14 family.

The polypeptide is Large ribosomal subunit protein uL14 (RPL23) (Syntrichia ruralis (Great hairy screw-moss)).